The chain runs to 2151 residues: RNA-directed RNA polymerase L (2151 aa).

5 residues coordinate Mn(2+): H36, E54, D97, E110, and V111. The For endonuclease activity role is filled by K124. In terms of domain architecture, RdRp catalytic spans 956–1142; sequence NGKFIRMKRK…SVNTEMWKSM (187 aa). D1099 is a binding site for Mg(2+).

Belongs to the Bunyavirales RNA polymerase family. Interacts with the viral nucleoprotein. Mn(2+) is required as a cofactor. The cofactor is Mg(2+).

The protein resides in the host cytoplasm. The protein localises to the host perinuclear region. It catalyses the reaction RNA(n) + a ribonucleoside 5'-triphosphate = RNA(n+1) + diphosphate. Its function is as follows. RNA-dependent RNA polymerase, which is responsible for the replication and transcription of the viral RNA genome using antigenomic RNA as an intermediate. During transcription, synthesizes subgenomic RNAs and assures their capping by a cap-snatching mechanism, which involves the endonuclease activity cleaving the host capped pre-mRNAs. These short capped RNAs are then used as primers for viral transcription. Cleaves ssRNA substrates but not DNA. Seems to downregulate the expression of its own and heterologous mRNAs through its endonuclease activity. This Apodemus agrarius (Eurasian field mouse) protein is RNA-directed RNA polymerase L.